The following is a 481-amino-acid chain: ATP synthase subunit beta, chloroplastic (481 aa).

Gly161 to Thr168 lines the ATP pocket.

The protein belongs to the ATPase alpha/beta chains family. F-type ATPases have 2 components, CF(1) - the catalytic core - and CF(0) - the membrane proton channel. CF(1) has five subunits: alpha(3), beta(3), gamma(1), delta(1), epsilon(1). CF(0) has four main subunits: a(1), b(1), b'(1) and c(9-12).

Its subcellular location is the plastid. The protein resides in the chloroplast thylakoid membrane. It carries out the reaction ATP + H2O + 4 H(+)(in) = ADP + phosphate + 5 H(+)(out). Functionally, produces ATP from ADP in the presence of a proton gradient across the membrane. The catalytic sites are hosted primarily by the beta subunits. In Mesostigma viride (Green alga), this protein is ATP synthase subunit beta, chloroplastic.